Consider the following 41-residue polypeptide: Large ribosomal subunit protein bL36 (41 aa).

The protein belongs to the bacterial ribosomal protein bL36 family.

The chain is Large ribosomal subunit protein bL36 from Rhizobium rhizogenes (strain K84 / ATCC BAA-868) (Agrobacterium radiobacter).